Reading from the N-terminus, the 532-residue chain is GH3 domain-containing protein (532 aa).

The signal sequence occupies residues 1–18 (MLLLWLLLLLLLLVPLLA). Residues 100–123 (LTQTSHTQEQESEETLPSPASPQY) form a disordered region. Asn-356 and Asn-451 each carry an N-linked (GlcNAc...) asparagine glycan.

This sequence belongs to the GH3 family. Highly expressed in mammary tissues from mature virgins and at day 13 of pregnancy, and at lower level during lactation. Expressed at intermediate level in liver. Expressed at lower level in kidney, heart and brain.

The protein localises to the endoplasmic reticulum. The protein resides in the nucleus envelope. The protein is GH3 domain-containing protein (Ghdc) of Mus musculus (Mouse).